A 288-amino-acid chain; its full sequence is Cytochrome b-c1 complex catalytic subunit, mitochondrial (288 aa).

A helical transmembrane segment spans residues 12-34 (SMVQKFIAGGVGVTGLTASYLLY). Residues 69-222 (ASIRRGFQVY…DLVEYEDGTP (154 aa)) form the Cytochrome c domain. Residues Cys82, Cys85, and His86 each contribute to the heme c site. Acidic residues predominate over residues 111–121 (EELEYDDEPDD). Residues 111 to 138 (EELEYDDEPDDEGKPRKRPGKLADYIPG) form a disordered region. A helical membrane pass occupies residues 250–268 (WGLKALVVLSSLYLLSIWV).

It belongs to the cytochrome c family. As to quaternary structure, component of the ubiquinol-cytochrome c oxidoreductase (cytochrome b-c1 complex, complex III, CIII), a multisubunit enzyme composed of 10 subunits. The complex is composed of 3 respiratory subunits cytochrome b (COB), cytochrome c1 (CYT1) and Rieske protein (RIP1), 2 core protein subunits COR1 and QCR2, and 5 low-molecular weight protein subunits QCR6, QCR7, QCR8, QCR9 and QCR10. The complex exists as an obligatory dimer and forms supercomplexes (SCs) in the inner mitochondrial membrane with a monomer or a dimer of cytochrome c oxidase (complex IV, CIV), resulting in 2 different assemblies (supercomplexes III(2)IV and III(2)IV(2)). The cofactor is heme c.

The protein localises to the mitochondrion inner membrane. It carries out the reaction a quinol + 2 Fe(III)-[cytochrome c](out) = a quinone + 2 Fe(II)-[cytochrome c](out) + 2 H(+)(out). Component of the ubiquinol-cytochrome c oxidoreductase, a multisubunit transmembrane complex that is part of the mitochondrial electron transport chain which drives oxidative phosphorylation. The complex plays an important role in the uptake of multiple carbon sources present in different host niches. The sequence is that of Cytochrome b-c1 complex catalytic subunit, mitochondrial from Candida albicans (strain SC5314 / ATCC MYA-2876) (Yeast).